The following is a 399-amino-acid chain: Phosphatidate cytidylyltransferase 5, chloroplastic (399 aa).

A chloroplast-targeting transit peptide spans 1-26 (MAPFVEVCRYKPLPLSLSSLCTCPCR). 6 consecutive transmembrane segments (helical) span residues 123-143 (VGGIVLAGGWVFTVAVAAAVL), 187-207 (FGHIDISITSAAFVVAMALLL), 217-237 (LSSTMFGLFYCGYLPCFWVKL), 266-286 (VGLVAILISFCGIIASDTFAF), 309-329 (AFAGLVGCISITILLSKSLSW), and 333-353 (LVSTIAFGVLNFFGSVFGDLT).

It belongs to the CDS family. Requires Mg(2+) as cofactor.

The protein resides in the plastid. Its subcellular location is the chloroplast membrane. It carries out the reaction a 1,2-diacyl-sn-glycero-3-phosphate + CTP + H(+) = a CDP-1,2-diacyl-sn-glycerol + diphosphate. The protein operates within phospholipid metabolism; CDP-diacylglycerol biosynthesis; CDP-diacylglycerol from sn-glycerol 3-phosphate: step 3/3. With respect to regulation, highest activities is obtained at about 30 mM CTP and 2 mM phosphatidic acid (PA). Its function is as follows. May be involved in the synthesis of minor phospholipids and in modulation of IP3-mediated signal transduction. Promotes the biosynthesis of plastidial phosphatidylglycerol (PG) which is required for structure and function of thylakoid membranes and, hence, for photoautotrophic growth. The sequence is that of Phosphatidate cytidylyltransferase 5, chloroplastic from Arabidopsis thaliana (Mouse-ear cress).